The sequence spans 244 residues: Orotidine 5'-phosphate decarboxylase (244 aa).

Substrate-binding positions include Asp12, Lys34, Asp61–Thr70, Thr125, Arg187, Gln196, Gly216, and Arg217. The Proton donor role is filled by Lys63.

It belongs to the OMP decarboxylase family. Type 1 subfamily. Homodimer.

It catalyses the reaction orotidine 5'-phosphate + H(+) = UMP + CO2. It participates in pyrimidine metabolism; UMP biosynthesis via de novo pathway; UMP from orotate: step 2/2. Functionally, catalyzes the decarboxylation of orotidine 5'-monophosphate (OMP) to uridine 5'-monophosphate (UMP). This chain is Orotidine 5'-phosphate decarboxylase, found in Dictyoglomus turgidum (strain DSM 6724 / Z-1310).